Here is a 233-residue protein sequence, read N- to C-terminus: Small ribosomal subunit protein uS2c (233 aa).

This sequence belongs to the universal ribosomal protein uS2 family.

It is found in the plastid. It localises to the chloroplast. In Galdieria sulphuraria (Red alga), this protein is Small ribosomal subunit protein uS2c (rps2).